The chain runs to 670 residues: tRNA 5-methylaminomethyl-2-thiouridine biosynthesis bifunctional protein MnmC (670 aa).

The segment at 1–242 (MTFSVQHAEI…KRECLSGLKI (242 aa)) is tRNA (mnm(5)s(2)U34)-methyltransferase. Residues 269–670 (IGGGIASLCA…KKWLKGSKVE (402 aa)) are FAD-dependent cmnm(5)s(2)U34 oxidoreductase.

It in the N-terminal section; belongs to the methyltransferase superfamily. tRNA (mnm(5)s(2)U34)-methyltransferase family. In the C-terminal section; belongs to the DAO family. The cofactor is FAD.

The protein resides in the cytoplasm. The catalysed reaction is 5-aminomethyl-2-thiouridine(34) in tRNA + S-adenosyl-L-methionine = 5-methylaminomethyl-2-thiouridine(34) in tRNA + S-adenosyl-L-homocysteine + H(+). Its function is as follows. Catalyzes the last two steps in the biosynthesis of 5-methylaminomethyl-2-thiouridine (mnm(5)s(2)U) at the wobble position (U34) in tRNA. Catalyzes the FAD-dependent demodification of cmnm(5)s(2)U34 to nm(5)s(2)U34, followed by the transfer of a methyl group from S-adenosyl-L-methionine to nm(5)s(2)U34, to form mnm(5)s(2)U34. The protein is tRNA 5-methylaminomethyl-2-thiouridine biosynthesis bifunctional protein MnmC of Haemophilus influenzae (strain ATCC 51907 / DSM 11121 / KW20 / Rd).